A 674-amino-acid chain; its full sequence is Acyl-coenzyme A oxidase acox-1.1 (674 aa).

FAD-binding positions include 149–152, 157–158, and glycine 191; these read YAQT and GT. Substrate is bound by residues 285–288 and arginine 295; that span reads KINY. Residues arginine 320 and 340 to 343 each bind FAD; that span reads QQHR. 4 residues coordinate ATP: histidine 342, serine 392, histidine 396, and glutamine 404. Residue glycine 411 participates in FAD binding. 433-434 serves as a coordination point for substrate; the sequence is YE. The active-site Proton acceptor is the glutamate 434. Residue glutamate 436 coordinates FAD. ATP contacts are provided by residues 533–536 and tyrosine 581; that span reads RASR. The short motif at 672-674 is the Microbody targeting signal element; the sequence is SKL.

This sequence belongs to the acyl-CoA oxidase family. In terms of assembly, homodimer. Forms a heterodimer with acox-1.2. Forms a heterodimer with acox-1.3; the interaction may be important for the stability of acox-1.3. It depends on FAD as a cofactor. As to expression, expressed in hypodermis and intestine.

The protein resides in the peroxisome. It carries out the reaction nonanoyl-CoA + O2 = (2E)-nonenoyl-CoA + H2O2. It catalyses the reaction dodecanoyl-CoA + O2 = (2E)-dodecenoyl-CoA + H2O2. The enzyme catalyses a 2,3-saturated acyl-CoA + O2 = a (2E)-enoyl-CoA + H2O2. The catalysed reaction is heptanoyl-CoA + O2 = (2E)-heptenoyl-CoA + H2O2. It carries out the reaction (8R)-8-hydroxynonanoyl-CoA + O2 = (2E,8R)-8-hydroxynonenoyl-CoA + H2O2. It catalyses the reaction pentanoyl-CoA + O2 = (2E)-pentenoyl-CoA + H2O2. The enzyme catalyses hexadecanoyl-CoA + O2 = (2E)-hexadecenoyl-CoA + H2O2. The catalysed reaction is IC-asc-C7-CoA + O2 = IC-asc-DeltaC7-CoA + H2O2. It carries out the reaction IC-asc-C9-CoA + O2 = IC-asc-DeltaC9-CoA + H2O2. It catalyses the reaction asc-omegaC5-CoA + O2 = asc-omegaDeltaC5-CoA + H2O2. The enzyme catalyses asc-C7-CoA + O2 = asc-DeltaC7-CoA + H2O2. The catalysed reaction is asc-omegaC7-CoA + O2 = asc-omegaDeltaC7-CoA + H2O2. It carries out the reaction asc-C9-CoA + O2 = asc-DeltaC9-CoA + H2O2. It catalyses the reaction asc-C13-CoA + O2 = asc-DeltaC13-CoA + H2O2. The protein operates within lipid metabolism; peroxisomal fatty acid beta-oxidation. Activated by ATP. ATP binding leads to a conformational change that promotes FAD cofactor binding and enzyme activity. ATP binding likely occurs during acox-1.1 folding and/or dimer formation. Functionally, involved in the first step of peroxisomal beta-oxidation by catalyzing the desaturation of fatty acid-derived side chains. Specifically, catalyzes the desaturation of fatty acids heptanoyl-CoA (C7), nonanoyl-CoA (C9), dodecanoyl-CoA (C12) and to a lesser extent pentanoyl-CoA (C5) and hexadecanoyl-CoA (C16), and hydroxylated fatty acid hydroxynonanoyl-CoA. Also, catalyzes the desaturation fatty acid-derived side chains of ascaroside pheromones, which regulates development and behavior. Specifically, shortens ascaroside with 5-carbon omega side chain (asc-omega-C5), 7-carbon side chain (asc-C7), 9-carbon side chain (asc-C9), 11-carbon side chain (asc-C11), 13-carbon side chain (asc-C13), 15-carbon side chain (asc-C15) and to a lesser extent ascarosides with 7-omega-carbon side chain (asc-omega-C7). Also shortens indol-3-carbonyl(IC)-ascarosides with 7-carbon side chain (IC-asc-C7) and to a lesser extent (IC)-ascarosides with 9-carbon side chain (IC-asc-C9). May associate and regulate the folding and/or the catalytic activity of other acyl-coenzyme A oxidases including acox-1.2, acox-1.3, acox-1.4 and acox-3 modulating the type of ascarosides produced. In association with acox-1.3, catalyzes the desaturation of asc-C7-CoA but not of fatty acids or hydroxylated fatty acids. Involved in the biosynthesis of asc-C6-MK (daumone 2) and asc-delta-C9 (daumone 3) but not asc-C7 (daumone 1); daumones are pheromones produced during unfavourable growth conditions which promote entry into the dauer stage. The protein is Acyl-coenzyme A oxidase acox-1.1 of Caenorhabditis elegans.